The chain runs to 360 residues: tRNA pseudouridine synthase D (360 aa).

Asp-76 acts as the Nucleophile in catalysis. One can recognise a TRUD domain in the interval 151 to 332 (GMPNFFGYQR…HGIYKEKNAW (182 aa)).

The protein belongs to the pseudouridine synthase TruD family.

It carries out the reaction uridine(13) in tRNA = pseudouridine(13) in tRNA. In terms of biological role, responsible for synthesis of pseudouridine from uracil-13 in transfer RNAs. The polypeptide is tRNA pseudouridine synthase D (Nitratiruptor sp. (strain SB155-2)).